Reading from the N-terminus, the 416-residue chain is Gamma-glutamyl phosphate reductase (416 aa).

This sequence belongs to the gamma-glutamyl phosphate reductase family.

It is found in the cytoplasm. It catalyses the reaction L-glutamate 5-semialdehyde + phosphate + NADP(+) = L-glutamyl 5-phosphate + NADPH + H(+). It functions in the pathway amino-acid biosynthesis; L-proline biosynthesis; L-glutamate 5-semialdehyde from L-glutamate: step 2/2. Catalyzes the NADPH-dependent reduction of L-glutamate 5-phosphate into L-glutamate 5-semialdehyde and phosphate. The product spontaneously undergoes cyclization to form 1-pyrroline-5-carboxylate. In Streptococcus mutans serotype c (strain ATCC 700610 / UA159), this protein is Gamma-glutamyl phosphate reductase.